Reading from the N-terminus, the 239-residue chain is 1-(5-phosphoribosyl)-5-[(5-phosphoribosylamino)methylideneamino] imidazole-4-carboxamide isomerase (239 aa).

Catalysis depends on D12, which acts as the Proton acceptor. The active-site Proton donor is the D132.

This sequence belongs to the HisA/HisF family.

It is found in the cytoplasm. The catalysed reaction is 1-(5-phospho-beta-D-ribosyl)-5-[(5-phospho-beta-D-ribosylamino)methylideneamino]imidazole-4-carboxamide = 5-[(5-phospho-1-deoxy-D-ribulos-1-ylimino)methylamino]-1-(5-phospho-beta-D-ribosyl)imidazole-4-carboxamide. It participates in amino-acid biosynthesis; L-histidine biosynthesis; L-histidine from 5-phospho-alpha-D-ribose 1-diphosphate: step 4/9. This Natronomonas pharaonis (strain ATCC 35678 / DSM 2160 / CIP 103997 / JCM 8858 / NBRC 14720 / NCIMB 2260 / Gabara) (Halobacterium pharaonis) protein is 1-(5-phosphoribosyl)-5-[(5-phosphoribosylamino)methylideneamino] imidazole-4-carboxamide isomerase.